The chain runs to 195 residues: L-rhamnose-binding lectin CSL3 (195 aa).

SUEL-type lectin domains are found at residues alanine 1 to valine 95 and isoleucine 105 to aspartate 195.

L-rhamnose binding lectin. Has hemagglutinating activity towards rabbit erythrocytes, human type A erythrocytes, human type B erythrocytes, human type O erythrocytes and sheep erythrocytes. Hemagglutinating activity is inhibited by smooth-type lipopolysaccharide (LPS) from S.flexneri 1A, A.salmonicida and E.coli K12, but not by rough-type LPS from S.flexneri, E.coli K12 and E.coli EH100. Agglutinates E.coli K12 and B.subtilis. This is L-rhamnose-binding lectin CSL3 from Oncorhynchus keta (Chum salmon).